The following is a 118-amino-acid chain: Large ribosomal subunit protein bL19 (118 aa).

This sequence belongs to the bacterial ribosomal protein bL19 family.

This protein is located at the 30S-50S ribosomal subunit interface and may play a role in the structure and function of the aminoacyl-tRNA binding site. In Marinobacter nauticus (strain ATCC 700491 / DSM 11845 / VT8) (Marinobacter aquaeolei), this protein is Large ribosomal subunit protein bL19.